Consider the following 460-residue polypeptide: MGKEDKQHINIVVIGHVDSGKSTTTGHLIYKCGGIDQRTIEKFEKEAAELGKGSFKYAWVLDKLKSERERGITIDIALWKFQTSKYEVTVIDAPGHRDFIKNMITGTSQADCAILIIASGTGEFEAGISKDGQTREHALLAFTLGVRQLIVALNKMDTCKWSQDRYNEIVKETSNFIKKVGYNPKSVPFVPISGFNGDNMIEASTNCPWYKGWEKETKAGKSTGKTLLEAIDAIEPPVRPTDKPLRLPLQDVYKISGIGTVPVGRVETGVIKPGMVVTFAPANVTTEVKSVEMHHQQLQAGNPGDNVGFNVKNVSVKEVRRGNVAGDSKNDPPAGCDSFNAQVIVLNHPGQVGNGYAPVLDCHTAHIACKFAELLEKIDRRTGKSVEDKPKFIKSGDAAIVKMIPSKPMCVESFTDFPPLGRFAVRDMRQTVAVGVIKSVEKNTGGSGKVTKAAQKAGKK.

Gly-2 bears the N,N,N-trimethylglycine mark. Lys-3 is modified (N6,N6-dimethyllysine; alternate). An N6-methyllysine; alternate modification is found at Lys-3. Residues 6–241 (KQHINIVVIG…DAIEPPVRPT (236 aa)) enclose the tr-type G domain. The tract at residues 15–22 (GHVDSGKS) is G1. Residue 15–22 (GHVDSGKS) participates in GTP binding. The residue at position 31 (Lys-31) is an N6-methyllysine. A G2 region spans residues 71-75 (GITID). Lys-80 carries the post-translational modification N6,N6,N6-trimethyllysine. Residues 92–95 (DAPG) are G3. GTP is bound by residues 92 to 96 (DAPGH) and 154 to 157 (NKMD). The tract at residues 154–157 (NKMD) is G4. Residues 193-195 (SGF) are G5. Lys-317 is modified (N6,N6-dimethyllysine; alternate). Residue Lys-317 is modified to N6-methyllysine; alternate. Position 391 is an N6-methyllysine (Lys-391).

This sequence belongs to the TRAFAC class translation factor GTPase superfamily. Classic translation factor GTPase family. EF-Tu/EF-1A subfamily.

The protein resides in the cytoplasm. Functionally, this protein promotes the GTP-dependent binding of aminoacyl-tRNA to the A-site of ribosomes during protein biosynthesis. This Aspergillus oryzae (strain ATCC 42149 / RIB 40) (Yellow koji mold) protein is Elongation factor 1-alpha (tef1).